The following is a 213-amino-acid chain: Membrane-spanning 4-domains subfamily A member 3 (213 aa).

At 1–26 (MKPEETGGSVYQPLDESRHVQRGVLQ) the chain is on the cytoplasmic side. Residues 27-47 (ALGAIQILNGILILALGIFLV) traverse the membrane as a helical segment. Residues 48-58 (CLQHVSHHFRH) lie on the Extracellular side of the membrane. A helical transmembrane segment spans residues 59–79 (FFFFTFYTGYPLWGAVFFISS). At 80-97 (GSLTVAAGRNPTRMLMQN) the chain is on the cytoplasmic side. Residues 98 to 118 (SFGINIASTTIAFVGTVFLSV) form a helical membrane-spanning segment. Over 119–148 (HLAFNTQAFKGCQSSPSPDVCISLGSSSDG) the chain is Extracellular. Residues 149 to 169 (LVSLMLILTLLELSVTISISA) traverse the membrane as a helical segment. At 170 to 213 (MWCLGNVCGLREAITSPPNSVESGILPEGSDSENLNTQPQASEE) the chain is on the cytoplasmic side. The interval 189-213 (SVESGILPEGSDSENLNTQPQASEE) is disordered. Polar residues predominate over residues 201–213 (SENLNTQPQASEE).

This sequence belongs to the MS4A family. As to quaternary structure, interacts with CDKN3. Interacts with CDKN3-CDK2 complexes through its binding to CDKN3; this interaction facilitates dissociation of cyclin A from CDKN3-CDK2 complexes. Expressed at low levels only in specific immune tissues, such as, spleen, bone marrow and peripheral blood leukocytes.

Its subcellular location is the membrane. Functionally, hematopoietic modulator for the G1-S cell cycle transition. Modulates the level of phosphorylation of cyclin-dependent kinase 2 (CDK2) through its direct binding to cyclin-dependent kinase inhibitor 3 (CDKN3/KAP). In Mus musculus (Mouse), this protein is Membrane-spanning 4-domains subfamily A member 3 (Ms4a3).